We begin with the raw amino-acid sequence, 182 residues long: T-cell surface glycoprotein CD3 gamma chain (182 aa).

Residues 1–22 (MEQGKHLAGLILAITLLQGTMA) form the signal peptide. The 76-residue stretch at 23–98 (QLKEGKHSVL…GSKENSKRLQ (76 aa)) folds into the Ig-like domain. Residues 23-116 (QLKEGKHSVL…CIELNSATVS (94 aa)) are Extracellular-facing. Cysteines 46 and 87 form a disulfide. N-linked (GlcNAc...) asparagine glycosylation occurs at asparagine 66. Residues 117–137 (GFIFTEIISLFFLAVGVYFIA) form a helical membrane-spanning segment. Residues 138–182 (GQDGVRQSRASDKQTLLSNDQLYQPLKDREDDQYSHLQGNNSRKN) lie on the Cytoplasmic side of the membrane. Serine 145 carries the post-translational modification Phosphoserine. Residue serine 148 is modified to Phosphoserine; by PKC. One can recognise an ITAM domain in the interval 149 to 177 (DKQTLLSNDQLYQPLKDREDDQYSHLQGN). Residues 153–154 (LL) carry the Di-leucine motif motif.

In terms of assembly, the TCR-CD3 complex is composed of a CD3D/CD3E and a CD3G/CD3E heterodimers that preferentially associate with TCRalpha and TCRbeta, respectively, to form TCRalpha/CD3E/CD3G and TCRbeta/CD3G/CD3E trimers. In turn, the hexamer interacts with CD3Z homodimer to form the TCR-CD3 complex. Alternatively, TCRalpha and TCRbeta can be replaced by TCRgamma and TCRdelta. In terms of processing, phosphorylated on Tyr residues after T-cell receptor triggering by LCK in association with CD4/CD8. Phosphorylated also by PKC; leading to the TCR complex down-regulation. Post-translationally, phosphorylated on Tyr residues after T-cell receptor triggering by LCK in association with CD4/CD8.

It localises to the cell membrane. In terms of biological role, part of the TCR-CD3 complex present on T-lymphocyte cell surface that plays an essential role in adaptive immune response. When antigen presenting cells (APCs) activate T-cell receptor (TCR), TCR-mediated signals are transmitted across the cell membrane by the CD3 chains CD3D, CD3E, CD3G and CD3Z. All CD3 chains contain immunoreceptor tyrosine-based activation motifs (ITAMs) in their cytoplasmic domain. Upon TCR engagement, these motifs become phosphorylated by Src family protein tyrosine kinases LCK and FYN, resulting in the activation of downstream signaling pathways. In addition to this role of signal transduction in T-cell activation, CD3G plays an essential role in the dynamic regulation of TCR expression at the cell surface. Indeed, constitutive TCR cycling is dependent on the di-leucine-based (diL) receptor-sorting motif present in CD3G. The polypeptide is T-cell surface glycoprotein CD3 gamma chain (CD3G) (Sus scrofa (Pig)).